A 296-amino-acid polypeptide reads, in one-letter code: 1,2-beta-oligomannan phosphorylase (296 aa).

The protein belongs to the glycosyl hydrolase 130 family. Homodimer.

The catalysed reaction is [(1-&gt;2)-beta-D-mannosyl](n) + phosphate = [(1-&gt;2)-beta-D-mannosyl](n-1) + alpha-D-mannose 1-phosphate. It participates in nucleotide-sugar biosynthesis; GDP-alpha-D-mannose biosynthesis. Its function is as follows. Probably involved in a salvage pathway for GDP-D-mannose biosynthesis. Catalyzes the reversible phosphorolysis of 1,2-beta-oligomannan. In phosphorolytic reactions, prefers 1,2-beta-oligomannan with a degree of polymerization (DP) of 3, 4 and 5. Produces alpha-D-mannose 1-phosphate, which is the precursor of GDP-D-mannose. The sequence is that of 1,2-beta-oligomannan phosphorylase from Thermoanaerobacter sp. (strain X514).